The sequence spans 547 residues: Protein RBL (547 aa).

5 WD repeats span residues 21-60, 65-104, 214-253, 285-332, and 334-373; these read LEHG…IAKE, DCSA…KIAR, SGAA…KNVL, EFQD…VKIL, and GPKE…NWSA. Residues 466–547 form a disordered region; that stretch reads SPASEEAGQN…GGDDDDDAYY (82 aa). Residues 499–511 are compositionally biased toward basic and acidic residues; that stretch reads SEKAMELQAEKAK. A compositionally biased stretch (acidic residues) spans 530–547; sequence QETDDSINGGDDDDDAYY.

Part of a complex composed of TRO, RBL and WDR5A. Interacts with TRO and WDR5A, but not with WDR5B. This complex is formed during both vegetative and reproductive development. In terms of tissue distribution, strongly expressed in root tips, shoot apices, vascular tissues, developing embryos and endosperms.

The protein localises to the nucleus. In terms of biological role, promotes the expression of FLC and FLC homologs to repress the floral transition. Promotes WRKY70 and LTP7 genes epigenetic methylation (e.g. H3K4me3) and subsequent expression. This is Protein RBL from Arabidopsis thaliana (Mouse-ear cress).